A 238-amino-acid chain; its full sequence is Purine nucleoside phosphorylase DeoD-type (238 aa).

Residue histidine 4 participates in a purine D-ribonucleoside binding. Residues glycine 20, arginine 24, arginine 43, and 87–90 (RVGT) contribute to the phosphate site. Residues 179–181 (EME) and 203–204 (SN) each bind a purine D-ribonucleoside.

It belongs to the PNP/UDP phosphorylase family. As to quaternary structure, homohexamer; trimer of homodimers.

It carries out the reaction a purine D-ribonucleoside + phosphate = a purine nucleobase + alpha-D-ribose 1-phosphate. The catalysed reaction is a purine 2'-deoxy-D-ribonucleoside + phosphate = a purine nucleobase + 2-deoxy-alpha-D-ribose 1-phosphate. Functionally, catalyzes the reversible phosphorolytic breakdown of the N-glycosidic bond in the beta-(deoxy)ribonucleoside molecules, with the formation of the corresponding free purine bases and pentose-1-phosphate. The polypeptide is Purine nucleoside phosphorylase DeoD-type (Lacticaseibacillus casei (strain BL23) (Lactobacillus casei)).